A 152-amino-acid chain; its full sequence is Regulator of G-protein signaling 21 (152 aa).

Residues 21–137 form the RGS domain; sequence NMDTLLANQA…LKSEIYKKLV (117 aa).

As to expression, expressed ubiquitously.

Inhibits signal transduction by increasing the GTPase activity of G protein alpha subunits thereby driving them into their inactive GDP-bound form. This Homo sapiens (Human) protein is Regulator of G-protein signaling 21 (RGS21).